Here is a 209-residue protein sequence, read N- to C-terminus: Guanylate kinase (209 aa).

A Guanylate kinase-like domain is found at 7–185 (GNLYIVAAPS…AAMELQSIVI (179 aa)). Residue 14–21 (APSGGGKT) coordinates ATP.

It belongs to the guanylate kinase family.

The protein resides in the cytoplasm. It carries out the reaction GMP + ATP = GDP + ADP. Its function is as follows. Essential for recycling GMP and indirectly, cGMP. In Legionella pneumophila (strain Paris), this protein is Guanylate kinase.